We begin with the raw amino-acid sequence, 241 residues long: Adenosylcobinamide-GDP ribazoletransferase (241 aa).

Transmembrane regions (helical) follow at residues 24–44 (IVFFFTITGAITGLMAASIFY), 48–68 (FINQLLASVASVSFLIIIYGF), 103–123 (VVTFFIIYIITISLLSSFNSI), 175–195 (VIILIFLIFYKYIIFTMFSLI), and 218–238 (IIGFTGELSRLISLLLILISF).

The protein belongs to the CobS family. It depends on Mg(2+) as a cofactor.

The protein resides in the cell membrane. It carries out the reaction alpha-ribazole + adenosylcob(III)inamide-GDP = adenosylcob(III)alamin + GMP + H(+). The catalysed reaction is alpha-ribazole 5'-phosphate + adenosylcob(III)inamide-GDP = adenosylcob(III)alamin 5'-phosphate + GMP + H(+). It participates in cofactor biosynthesis; adenosylcobalamin biosynthesis; adenosylcobalamin from cob(II)yrinate a,c-diamide: step 7/7. Functionally, joins adenosylcobinamide-GDP and alpha-ribazole to generate adenosylcobalamin (Ado-cobalamin). Also synthesizes adenosylcobalamin 5'-phosphate from adenosylcobinamide-GDP and alpha-ribazole 5'-phosphate. The protein is Adenosylcobinamide-GDP ribazoletransferase of Picrophilus torridus (strain ATCC 700027 / DSM 9790 / JCM 10055 / NBRC 100828 / KAW 2/3).